Here is a 103-residue protein sequence, read N- to C-terminus: Endoribonuclease MazF3 (103 aa).

This sequence belongs to the PemK/MazF family. Forms a complex with cognate antitoxin MazE3.

Functionally, toxic component of a type II toxin-antitoxin (TA) system. Acts as an endoribonuclease, cleaving in U-rich regions. Neutralized by cognate antitoxin MazE3. In Mycobacterium tuberculosis (strain CDC 1551 / Oshkosh), this protein is Endoribonuclease MazF3 (mazF3).